The chain runs to 469 residues: A-type ATP synthase subunit B (469 aa).

This sequence belongs to the ATPase alpha/beta chains family. As to quaternary structure, has multiple subunits with at least A(3), B(3), C, D, E, F, H, I and proteolipid K(x).

The protein localises to the cell membrane. Its function is as follows. Component of the A-type ATP synthase that produces ATP from ADP in the presence of a proton gradient across the membrane. The B chain is a regulatory subunit. The protein is A-type ATP synthase subunit B of Staphylothermus marinus (strain ATCC 43588 / DSM 3639 / JCM 9404 / F1).